A 244-amino-acid polypeptide reads, in one-letter code: 6-carboxyhexanoate--CoA ligase (244 aa).

The protein belongs to the BioW family. Homodimer. Mg(2+) is required as a cofactor.

It catalyses the reaction heptanedioate + ATP + CoA = 6-carboxyhexanoyl-CoA + AMP + diphosphate. The protein operates within metabolic intermediate metabolism; pimeloyl-CoA biosynthesis; pimeloyl-CoA from pimelate: step 1/1. In terms of biological role, catalyzes the transformation of pimelate into pimeloyl-CoA with concomitant hydrolysis of ATP to AMP. This is 6-carboxyhexanoate--CoA ligase from Methanococcus maripaludis (strain C7 / ATCC BAA-1331).